The primary structure comprises 550 residues: Natural resistance-associated macrophage protein 1 (550 aa).

The disordered stretch occupies residues 1 to 45 (MTGDKGPQRLSGSSYGSISSPTSPTSPGPQQAPPRETYLSEKIPI). Residues 1–58 (MTGDKGPQRLSGSSYGSISSPTSPTSPGPQQAPPRETYLSEKIPIPDTKPGTFSLRKL) are Cytoplasmic-facing. The span at 11-23 (SGSSYGSISSPTS) shows a compositional bias: low complexity. The chain crosses the membrane as a helical span at residues 59–76 (WAFTGPGFLMSIAFLDPG). The Extracellular portion of the chain corresponds to 77 to 85 (NIESDLQAG). A helical membrane pass occupies residues 86–105 (AVAGFKLLWVLLWATVLGLL). Residues 106-142 (CQRLAARLGVVTGKDLGEVCHLYYPKVPRTVLWLTIE) are Cytoplasmic-facing. Residues 143–163 (LAIVGSDMQEVIGTAIAFNLL) traverse the membrane as a helical segment. The Extracellular segment spans residues 164–167 (SAGR). A helical transmembrane segment spans residues 168–187 (IPLWGGVLITIVDTFFFLFL). The Cytoplasmic segment spans residues 188–196 (DNYGLRKLE). A helical membrane pass occupies residues 197–217 (AFFGLLITIMALTFGYEYVVA). The Extracellular portion of the chain corresponds to 218–240 (RPEQGALLRGLFLPSCPGCGHPE). A helical transmembrane segment spans residues 241 to 259 (LLQAVGIVGAIIMPHNIYL). Residues 260-287 (HSALVKSREIDRARRADIREANMYFLIE) lie on the Cytoplasmic side of the membrane. The chain crosses the membrane as a helical span at residues 288-307 (ATIALSVSFIINLFVMAVFG). Over 308 to 349 (QAFYQKTNQAAFNICANSSLHDYAKIFPMNNATVAVDIYQGG) the chain is Extracellular. Residues Asn-324 and Asn-338 are each glycosylated (N-linked (GlcNAc...) asparagine). The helical transmembrane segment at 350–369 (VILGCLFGPAALYIWAIGLL) threads the bilayer. Topologically, residues 370–400 (AAGQSSTMTGTYAGQFVMEGFLRLRWSRFAR) are cytoplasmic. A helical membrane pass occupies residues 401–418 (VLLTRSCAILPTVLVAVF). At 419-429 (RDLRDLSGLND) the chain is on the extracellular side. The chain crosses the membrane as a helical span at residues 430–450 (LLNVLQSLLLPFAVLPILTFT). Topologically, residues 451–466 (SMPTLMQEFANGLLNK) are cytoplasmic. Residues 467-488 (VVTSSIMVLVCAINLYFVVSYL) traverse the membrane as a helical segment. At 489–496 (PSLPHPAY) the chain is on the extracellular side. Residues 497–516 (FGLAALLAAAYLGLSTYLVW) form a helical membrane-spanning segment. Residues 517 to 550 (TCCLAHGATFLAHSSHHHFLYGLLEEDQKGETSG) lie on the Cytoplasmic side of the membrane.

This sequence belongs to the NRAMP family. In terms of tissue distribution, macrophages; peripheral blood leukocytes, lung, spleen and liver.

The protein resides in the late endosome membrane. It is found in the lysosome membrane. It carries out the reaction Zn(2+)(in) + H(+)(out) = Zn(2+)(out) + H(+)(in). It catalyses the reaction Fe(2+)(in) + H(+)(out) = Fe(2+)(out) + H(+)(in). The enzyme catalyses Mn(2+)(in) + H(+)(out) = Mn(2+)(out) + H(+)(in). Macrophage-specific antiporter that fluxes metal ions in either direction against a proton gradient. Localized to late endosomal lysosomal membranes, delivers bivalent cations from the cytosol into these acidic compartments where they may directly affect antimicrobial activity. Involved in iron metabolism and host natural resistance to infection with intracellular parasites. Pathogen resistance involves sequestration of Fe(2+) and Mn(2+), cofactors of both prokaryotic and eukaryotic catalases and superoxide dismutases, not only to protect the macrophage against its own generation of reactive oxygen species, but to deny the cations to the pathogen for synthesis of its protective enzymes. The polypeptide is Natural resistance-associated macrophage protein 1 (Homo sapiens (Human)).